A 79-amino-acid polypeptide reads, in one-letter code: DNA-directed RNA polymerase subunit omega (79 aa).

It belongs to the RNA polymerase subunit omega family. As to quaternary structure, the RNAP catalytic core consists of 2 alpha, 1 beta, 1 beta' and 1 omega subunit. When a sigma factor is associated with the core the holoenzyme is formed, which can initiate transcription.

It catalyses the reaction RNA(n) + a ribonucleoside 5'-triphosphate = RNA(n+1) + diphosphate. Its function is as follows. Promotes RNA polymerase assembly. Latches the N- and C-terminal regions of the beta' subunit thereby facilitating its interaction with the beta and alpha subunits. The polypeptide is DNA-directed RNA polymerase subunit omega (Kosmotoga olearia (strain ATCC BAA-1733 / DSM 21960 / TBF 19.5.1)).